Reading from the N-terminus, the 994-residue chain is MSQFTSSYDPTSFEARLYAAWEAAGHFKPSGTGQPYTILLPPPNVTGTLHMGHAFQQTLMDALVRYHRMCGDDTLWQVGTDHAGIATEMVVSRNVVLEGHGETRDSLGRDGFINKVWEWKQQSGDTIERQMRRLGVSADWSRSTFTMDPQPSAAVTEAFVRWYEAGLIYRGQRLVNWDPVLKTAISDLEVENVAEEGMLWSIRYPLSDGVTYEHVEHDAAGNEILRETRDSLIVATTRPETLLGDTAVMVHPEDRRYTALIGKTVTLPLTGRHIPVIGDAYVDPTFGTGVVKVTPAHDFNDYQIGLRHRLPMIQVLDDAACIVSKTSIQSGMPSGATSDTTNTPSDPEASSAANQHDTLVMPAHLAGLDRYAARKQILADLDAQGLLVAAIPHTLQVPRGDRTGQVIEPYLTAQWFVKMETLAARGLALVERGAVTFVPPNWINTYRHWMENIQDWCISRQLWWGHRIPAWFDTQGGVYVGRSEAEVRAKHALGPEVTLTQDNDVLETWFSSQLWPFSTLGWPDPTAMAEHGYARYLPSSVLVTGFDIIFFWVARMIMATDHFTGNVPFHDVYITGLIRDAQGQKMSKSKGNVLDPLDIIDGITLDDLVAKRTTGLMQPKLAEKIAKATRKEFPEGIAPHGADALRFTIAALATHGRDIKFDLGRAEGYKNFCNKLWNATRFVLMNTADDTAHSPAQHQAGQDGQDAPRTPQPRTDAEQWILSRLTAITAEAHAQFAAYRFDLLAQALYEFAWNEFCDWFVELAKPALNSDDTQAAASTRHTLLYVLETLLRLLHPLIPFITEELWRQVAPRLGIQATTLMLRPYPQPQQLETAAFANAAADVEWLKIMVSALRRIRSTLNVPPSRRVSLLLQGDQEVDRRRITHFATALHFLLKLEHIDWLGADSAAPPSATAIVGTLKLLVPLEGLIDVDAERVRLDKEIKRVESEIDKSNGKLSNAVFVQNAPAAVVEQERSRLTEWTTQLNGLRERRATL.

The 'HIGH' region signature appears at 43 to 53; sequence PNVTGTLHMGH. Residues 329–345 are compositionally biased toward polar residues; the sequence is QSGMPSGATSDTTNTPS. The interval 329 to 355 is disordered; sequence QSGMPSGATSDTTNTPSDPEASSAANQ. The 'KMSKS' region motif lies at 585–589; it reads KMSKS. Lys-588 contributes to the ATP binding site. The disordered stretch occupies residues 692–714; sequence AHSPAQHQAGQDGQDAPRTPQPR. Over residues 696–707 the composition is skewed to low complexity; that stretch reads AQHQAGQDGQDA. A coiled-coil region spans residues 928-994; it reads LIDVDAERVR…NGLRERRATL (67 aa).

It belongs to the class-I aminoacyl-tRNA synthetase family. ValS type 1 subfamily. Monomer.

The protein resides in the cytoplasm. The enzyme catalyses tRNA(Val) + L-valine + ATP = L-valyl-tRNA(Val) + AMP + diphosphate. In terms of biological role, catalyzes the attachment of valine to tRNA(Val). As ValRS can inadvertently accommodate and process structurally similar amino acids such as threonine, to avoid such errors, it has a 'posttransfer' editing activity that hydrolyzes mischarged Thr-tRNA(Val) in a tRNA-dependent manner. The chain is Valine--tRNA ligase from Xylella fastidiosa (strain 9a5c).